A 468-amino-acid polypeptide reads, in one-letter code: Phosphatidylinositol-binding clathrin assembly protein LAP (468 aa).

Residues 16–158 enclose the ENTH domain; that stretch reads RHSLAGQGLA…LSYRAMAFDF (143 aa). The tract at residues 438–468 is disordered; that stretch reads NAGDGTAKYDGGAGSSPFDWGATDDDGGAAQ. The span at 459 to 468 shows a compositional bias: acidic residues; the sequence is ATDDDGGAAQ.

It belongs to the PICALM/SNAP91 family. As to quaternary structure, binds clathrin and phosphatidylinositol 4,5-bisphosphate. In terms of tissue distribution, in embryos, expression is seen in central and peripheral nervous systems (brain and ventral nerve cord) and Garland cells. Coexpressed with clathrin at presynaptic boutons of neuromuscular junctions.

The protein resides in the membrane. Its subcellular location is the clathrin-coated pit. The protein localises to the golgi apparatus. It localises to the cytoplasmic vesicle. It is found in the clathrin-coated vesicle. Assembly protein recruiting clathrin and adaptor protein complex 2 (AP2) to cell membranes at sites of coated-pit formation and clathrin-vesicle assembly. May be required to determine the amount of membrane to be recycled, possibly by regulating the size of the clathrin cage. Involved in AP2-dependent clathrin-mediated endocytosis at the neuromuscular junction. The sequence is that of Phosphatidylinositol-binding clathrin assembly protein LAP (lap) from Drosophila melanogaster (Fruit fly).